Here is a 255-residue protein sequence, read N- to C-terminus: Cyclic di-GMP phosphodiesterase PdeH (255 aa).

Residues 13–255 (EASIESLQER…ETLNTAVLAL (243 aa)) form the EAL domain.

It catalyses the reaction 3',3'-c-di-GMP + H2O = 5'-phosphoguanylyl(3'-&gt;5')guanosine + H(+). In terms of biological role, involved in the control of the switch from cell motility to adhesion via regulation of cellular levels of cyclic-di-GMP (c-di-GMP). Part of a signaling cascade that regulates curli biosynthesis. The cascade is composed of two c-di-GMP control modules, in which c-di-GMP controlled by the DgcE/PdeH pair (module I) regulates the activity of the DgcM/PdeR pair (module II), which in turn regulates activity of the transcription factor MlrA and expression of the master biofilm regulator csgD. Effect on flagella is controlled via the c-di-GMP-binding flagellar brake protein YcgR. The chain is Cyclic di-GMP phosphodiesterase PdeH from Escherichia coli (strain K12).